A 287-amino-acid chain; its full sequence is Ribosomal RNA small subunit methyltransferase A (287 aa).

S-adenosyl-L-methionine-binding residues include Asn28, Leu30, Gly55, Glu76, Asp101, and Asn125.

The protein belongs to the class I-like SAM-binding methyltransferase superfamily. rRNA adenine N(6)-methyltransferase family. RsmA subfamily.

The protein resides in the cytoplasm. It carries out the reaction adenosine(1518)/adenosine(1519) in 16S rRNA + 4 S-adenosyl-L-methionine = N(6)-dimethyladenosine(1518)/N(6)-dimethyladenosine(1519) in 16S rRNA + 4 S-adenosyl-L-homocysteine + 4 H(+). Functionally, specifically dimethylates two adjacent adenosines (A1518 and A1519) in the loop of a conserved hairpin near the 3'-end of 16S rRNA in the 30S particle. May play a critical role in biogenesis of 30S subunits. The polypeptide is Ribosomal RNA small subunit methyltransferase A (Alkaliphilus oremlandii (strain OhILAs) (Clostridium oremlandii (strain OhILAs))).